Here is a 752-residue protein sequence, read N- to C-terminus: Primary amine oxidase (752 aa).

The N-terminal stretch at 1–27 (MAILSPRKTALALAVALSCAWQSPAFA) is a signal peptide. Substrate contacts are provided by residues 408–419 (YLDSGDYGMGTL) and 490–495 (VGNYDY). Asp-410 (proton acceptor) is an active-site residue. Tyr-493 (schiff-base intermediate with substrate; via topaquinone) is an active-site residue. 2',4',5'-topaquinone is present on Tyr-493. Cu cation-binding residues include His-551 and His-553. Ca(2+)-binding residues include Asp-560, Leu-561, Asp-562, Glu-600, Tyr-694, Asp-697, Glu-699, and Asp-705. Asp-560 is a Mn(2+) binding site. Asp-562 serves as a coordination point for Mn(2+). A Mn(2+)-binding site is contributed by Asp-705. Cu cation is bound at residue His-716.

It belongs to the copper/topaquinone oxidase family. Homodimer. Cu cation is required as a cofactor. The cofactor is Ca(2+). It depends on L-topaquinone as a cofactor. Requires Mn(2+) as cofactor. Post-translationally, topaquinone (TPQ) is generated by copper-dependent autoxidation of a specific tyrosyl residue.

Its subcellular location is the periplasm. The catalysed reaction is a primary methyl amine + O2 + H2O = an aldehyde + H2O2 + NH4(+). Its function is as follows. Active on tyramine, tryptamine, beta-phenethylamine and dopamine. This chain is Primary amine oxidase (maoA), found in Klebsiella michiganensis (strain ATCC 8724 / DSM 4798 / JCM 20051 / NBRC 3318 / NRRL B-199 / KCTC 1686 / BUCSAV 143 / CCM 1901).